Reading from the N-terminus, the 215-residue chain is Thymidylate kinase (215 aa).

Residue 11-18 (GIDGAGKS) participates in ATP binding.

It belongs to the thymidylate kinase family.

It catalyses the reaction dTMP + ATP = dTDP + ADP. Its function is as follows. Phosphorylation of dTMP to form dTDP in both de novo and salvage pathways of dTTP synthesis. This chain is Thymidylate kinase, found in Nitrosomonas europaea (strain ATCC 19718 / CIP 103999 / KCTC 2705 / NBRC 14298).